Consider the following 70-residue polypeptide: MRTRIREFRAKYGMTQEELAKKVGVRRETIVFLEKGKYNPSLRLAYKIARVFNARIEDLFIFDDEELWGK.

Positions 5-59 (IREFRAKYGMTQEELAKKVGVRRETIVFLEKGKYNPSLRLAYKIARVFNARIEDL) constitute an HTH cro/C1-type domain. Residues 16–35 (QEELAKKVGVRRETIVFLEK) constitute a DNA-binding region (H-T-H motif).

This is an uncharacterized protein from Archaeoglobus fulgidus (strain ATCC 49558 / DSM 4304 / JCM 9628 / NBRC 100126 / VC-16).